The primary structure comprises 352 residues: Photosystem II D2 protein (352 aa).

Over 1–31 the chain is Cytoplasmic; the sequence is MTIAVGRAPVERGWFDVLDDWLKRDRFVFIG. The helical transmembrane segment at 32 to 53 threads the bilayer; it reads WSGLLLFPCAFMALGGWLTGTT. Topologically, residues 54–108 are lumenal, thylakoid; it reads FVTSWYTHGLASSYLEGANFLTVAVSSPADAFGHSLLFLWGPEAQGNLTRWFQIG. Residues 109-131 traverse the membrane as a helical segment; it reads GLWPFVALHGAFGLIGFMLRQFE. Position 117 (H117) interacts with chlorophyll a. Q129 contacts pheophytin a. Over 132–140 the chain is Cytoplasmic; sequence ISRLVGIRP. The helical transmembrane segment at 141 to 162 threads the bilayer; that stretch reads YNAIAFSGPIAVFVSVFLMYPL. Residue N142 participates in pheophytin a binding. Topologically, residues 163-190 are lumenal, thylakoid; sequence GQSSWFFAPSFGVAGIFRFILFLQGFHN. Residues 191-217 form a helical membrane-spanning segment; that stretch reads WTLNPFHMMGVAGILGGALLCAIHGAT. Residue H197 participates in chlorophyll a binding. The a plastoquinone site is built by H214 and F261. H214 lines the Fe cation pocket. Topologically, residues 218–265 are cytoplasmic; sequence VENTLFEDGEDSNTFRAFEPTQAEETYSMVTANRFWSQIFGIAFSNKR. The helical transmembrane segment at 266–288 threads the bilayer; it reads WLHFFMLFVPVTGLWMSSVGIVG. Fe cation is bound at residue H268. Topologically, residues 289 to 352 are lumenal, thylakoid; sequence LALNLRAYDF…EEVLPRGNAL (64 aa).

Belongs to the reaction center PufL/M/PsbA/D family. As to quaternary structure, PSII is composed of 1 copy each of membrane proteins PsbA, PsbB, PsbC, PsbD, PsbE, PsbF, PsbH, PsbI, PsbJ, PsbK, PsbL, PsbM, PsbT, PsbX, PsbY, PsbZ, Psb30/Ycf12, peripheral proteins PsbO, CyanoQ (PsbQ), PsbU, PsbV and a large number of cofactors. It forms dimeric complexes. It depends on The D1/D2 heterodimer binds P680, chlorophylls that are the primary electron donor of PSII, and subsequent electron acceptors. It shares a non-heme iron and each subunit binds pheophytin, quinone, additional chlorophylls, carotenoids and lipids. There is also a Cl(-1) ion associated with D1 and D2, which is required for oxygen evolution. The PSII complex binds additional chlorophylls, carotenoids and specific lipids. as a cofactor.

It localises to the cellular thylakoid membrane. It carries out the reaction 2 a plastoquinone + 4 hnu + 2 H2O = 2 a plastoquinol + O2. Functionally, photosystem II (PSII) is a light-driven water:plastoquinone oxidoreductase that uses light energy to abstract electrons from H(2)O, generating O(2) and a proton gradient subsequently used for ATP formation. It consists of a core antenna complex that captures photons, and an electron transfer chain that converts photonic excitation into a charge separation. The D1/D2 (PsbA/PsbD) reaction center heterodimer binds P680, the primary electron donor of PSII as well as several subsequent electron acceptors. D2 is needed for assembly of a stable PSII complex. This Synechocystis sp. (strain ATCC 27184 / PCC 6803 / Kazusa) protein is Photosystem II D2 protein.